A 298-amino-acid polypeptide reads, in one-letter code: Proline-rich protein 32 (298 aa).

Residues 36–56 (CLSSKPEDDAEPWGQPQVPLR) form a disordered region.

This Homo sapiens (Human) protein is Proline-rich protein 32 (PRR32).